A 166-amino-acid chain; its full sequence is Large ribosomal subunit protein uL10 (166 aa).

Belongs to the universal ribosomal protein uL10 family. Part of the ribosomal stalk of the 50S ribosomal subunit. The N-terminus interacts with L11 and the large rRNA to form the base of the stalk. The C-terminus forms an elongated spine to which L12 dimers bind in a sequential fashion forming a multimeric L10(L12)X complex.

Its function is as follows. Forms part of the ribosomal stalk, playing a central role in the interaction of the ribosome with GTP-bound translation factors. This chain is Large ribosomal subunit protein uL10, found in Phytoplasma australiense.